The sequence spans 325 residues: UPF0164 protein TP_0856 (325 aa).

Residues 1–28 (MVHYKSVFYKSAALVCGFVLAGASVAIA) form the signal peptide.

It belongs to the UPF0164 family.

This chain is UPF0164 protein TP_0856, found in Treponema pallidum (strain Nichols).